The chain runs to 83 residues: DNA-directed RNA polymerase subunit Rpo5 (83 aa).

Belongs to the archaeal Rpo5/eukaryotic RPB5 RNA polymerase subunit family. In terms of assembly, part of the RNA polymerase complex.

Its subcellular location is the cytoplasm. The enzyme catalyses RNA(n) + a ribonucleoside 5'-triphosphate = RNA(n+1) + diphosphate. Its function is as follows. DNA-dependent RNA polymerase (RNAP) catalyzes the transcription of DNA into RNA using the four ribonucleoside triphosphates as substrates. The sequence is that of DNA-directed RNA polymerase subunit Rpo5 from Nitrosopumilus maritimus (strain SCM1).